The primary structure comprises 37 residues: Beta-2-microglobulin (37 aa).

Residues 11–37 enclose the Ig-like C1-type domain; sequence GKEDVLICHVSNFHPPDITITLLKNGE.

This sequence belongs to the beta-2-microglobulin family. As to quaternary structure, heterodimer of an alpha chain and a beta chain. Beta-2-microglobulin is the beta-chain of major histocompatibility complex class I molecules.

It is found in the secreted. Component of the class I major histocompatibility complex (MHC). Involved in the presentation of peptide antigens to the immune system. This is Beta-2-microglobulin (b2m) from Oreochromis niloticus (Nile tilapia).